The chain runs to 100 residues: Large ribosomal subunit protein bL28 (100 aa).

It belongs to the bacterial ribosomal protein bL28 family.

This is Large ribosomal subunit protein bL28 from Ehrlichia chaffeensis (strain ATCC CRL-10679 / Arkansas).